The following is a 456-amino-acid chain: MALPVVAIIGRPNVGKSTLVNRLCQSREAIVHDEPGVTRDRTYQDGFWRDRDFKVVDTGGLVFDDDSEFLPEIREQANLALEEAVVALVIVDGQEGITTADESIAEFLRSRSCKTLVVVNKCESPEQGLAMAAEFWKLGLGEPYPISAIHGVGTGDLLDQVVNLFPSKDLDEVSDSPVQLAIIGRPNVGKSSLLNSICGETRAIVSSIRGTTRDTIDTRITHQGKEWKLVDTAGIRRRRSVNYGPEFFGINRSFKAIERSDVCVLVIDALDGVTEQDQRLAGRIEQEGRACLIVINKWDAVEKDSHTMSAMEKDIRSKLYFLDWAQMIFTSAVTGQRVEGIFALATLAVDQSRRRVTTSVVNEVLTEALKWRSPPTTRGGKQGRLYYGTQVAINPPSFTLFVNEPKLFGETYRRYIERQIREGLGFEGTPIKLFWRGKQQRDVEKDMARQQKGVQN.

2 consecutive EngA-type G domains span residues 4 to 169 (PVVA…PSKD) and 178 to 353 (VQLA…DQSR). GTP-binding positions include 10–17 (GRPNVGKS), 57–61 (DTGGL), 120–123 (NKCE), 184–191 (GRPNVGKS), 231–235 (DTAGI), and 296–299 (NKWD). The KH-like domain occupies 354-439 (RRVTTSVVNE…PIKLFWRGKQ (86 aa)).

Belongs to the TRAFAC class TrmE-Era-EngA-EngB-Septin-like GTPase superfamily. EngA (Der) GTPase family. In terms of assembly, associates with the 50S ribosomal subunit.

Its function is as follows. GTPase that plays an essential role in the late steps of ribosome biogenesis. This Prochlorococcus marinus (strain NATL1A) protein is GTPase Der.